Consider the following 457-residue polypeptide: Proline-specific permease ProY (457 aa).

Residues methionine 1–arginine 17 lie on the Cytoplasmic side of the membrane. 2 consecutive transmembrane segments (helical) span residues phenylalanine 18 to lysine 38 and methionine 39 to methionine 59. Residues arginine 60–glycine 84 lie on the Cytoplasmic side of the membrane. A helical transmembrane segment spans residues proline 85 to alanine 105. The Periplasmic segment spans residues aspartate 106–tyrosine 113. The helical transmembrane segment at methionine 114–isoleucine 134 threads the bilayer. The Cytoplasmic segment spans residues cysteine 135 to lysine 156. The chain crosses the membrane as a helical span at residues valine 157 to asparagine 177. Residues glycine 178 to glycine 197 lie on the Periplasmic side of the membrane. A helical membrane pass occupies residues tryptophan 198–isoleucine 218. Residues glycine 219–arginine 242 lie on the Cytoplasmic side of the membrane. Residues isoleucine 243–valine 263 traverse the membrane as a helical segment. Residues glycine 264–methionine 277 lie on the Periplasmic side of the membrane. Residues glycine 278–isoleucine 298 form a helical membrane-spanning segment. At asparagine 299–proline 331 the chain is on the cytoplasmic side. Residues tryptophan 332–methionine 352 traverse the membrane as a helical segment. Over proline 353–asparagine 355 the chain is Periplasmic. The chain crosses the membrane as a helical span at residues valine 356 to leucine 376. Residues leucine 377 to proline 399 are Cytoplasmic-facing. The helical transmembrane segment at glycine 400–glycine 420 threads the bilayer. Residues tyrosine 421–aspartate 424 lie on the Periplasmic side of the membrane. The chain crosses the membrane as a helical span at residues threonine 425–phenylalanine 445. Residues lysine 446–glutamine 457 lie on the Cytoplasmic side of the membrane.

The protein belongs to the amino acid-polyamine-organocation (APC) superfamily. Amino acid transporter (AAT) (TC 2.A.3.1) family.

The protein localises to the cell inner membrane. Functionally, permease that is involved in the transport across the cytoplasmic membrane of proline. This is Proline-specific permease ProY (proY) from Escherichia coli O157:H7.